The primary structure comprises 360 residues: Phospho-N-acetylmuramoyl-pentapeptide-transferase (360 aa).

A run of 10 helical transmembrane segments spans residues 21–41, 73–93, 94–114, 132–152, 168–188, 199–219, 239–259, 263–283, 288–308, and 338–358; these read YLSFRAIASILTALCLSLWMG, TMGGVMILAAIIITVLMWADL, SNPYVWAVLVVLAGYGAVGFV, WKYFWQSAIALVVAFALYAHG, VMPQLGLLYIVLTYFVIVGTS, GLAIMPTVMVAAGFAVIAWAT, LVVVCTAIVGAGLGFLWFNTY, VFMGDVGSLALGGALGVIAVL, LVLVIMGGVFVMETLSVILQV, and VIVRFWIISMVLVLVGLATLK.

The protein belongs to the glycosyltransferase 4 family. MraY subfamily. Mg(2+) serves as cofactor.

It is found in the cell inner membrane. The enzyme catalyses UDP-N-acetyl-alpha-D-muramoyl-L-alanyl-gamma-D-glutamyl-meso-2,6-diaminopimeloyl-D-alanyl-D-alanine + di-trans,octa-cis-undecaprenyl phosphate = di-trans,octa-cis-undecaprenyl diphospho-N-acetyl-alpha-D-muramoyl-L-alanyl-D-glutamyl-meso-2,6-diaminopimeloyl-D-alanyl-D-alanine + UMP. It participates in cell wall biogenesis; peptidoglycan biosynthesis. Its function is as follows. Catalyzes the initial step of the lipid cycle reactions in the biosynthesis of the cell wall peptidoglycan: transfers peptidoglycan precursor phospho-MurNAc-pentapeptide from UDP-MurNAc-pentapeptide onto the lipid carrier undecaprenyl phosphate, yielding undecaprenyl-pyrophosphoryl-MurNAc-pentapeptide, known as lipid I. This is Phospho-N-acetylmuramoyl-pentapeptide-transferase from Vibrio atlanticus (strain LGP32) (Vibrio splendidus (strain Mel32)).